The chain runs to 422 residues: 5'-deoxyadenosine deaminase (422 aa).

Residues histidine 57 and histidine 59 each coordinate Zn(2+). Residues glutamate 86 and histidine 178 each contribute to the substrate site. Zn(2+) is bound at residue histidine 205. Substrate-binding residues include glutamate 208 and aspartate 294. Zn(2+) is bound at residue aspartate 294.

It belongs to the metallo-dependent hydrolases superfamily. MTA/SAH deaminase family. Homotetramer. It depends on Zn(2+) as a cofactor.

The enzyme catalyses 5'-deoxyadenosine + H2O + H(+) = 5'-deoxyinosine + NH4(+). It catalyses the reaction S-adenosyl-L-homocysteine + H2O + H(+) = S-inosyl-L-homocysteine + NH4(+). The catalysed reaction is S-methyl-5'-thioadenosine + H2O + H(+) = S-methyl-5'-thioinosine + NH4(+). It carries out the reaction adenosine + H2O + H(+) = inosine + NH4(+). Its pathway is amino-acid biosynthesis; S-adenosyl-L-methionine biosynthesis. In terms of biological role, catalyzes the deamination of three SAM-derived enzymatic products, namely 5'-deoxyadenosine, S-adenosyl-L-homocysteine, and 5'-methylthioadenosine, to produce the inosine analogs. Can also deaminate adenosine. The preferred substrate for this enzyme is 5'-deoxyadenosine, but all these substrates are efficiently deaminated. Likely functions in a S-adenosyl-L-methionine (SAM) recycling pathway from S-adenosyl-L-homocysteine (SAH) produced from SAM-dependent methylation reactions. May also be involved in the recycling of 5'-deoxyadenosine, whereupon the 5'-deoxyribose moiety of 5'-deoxyinosine is further metabolized to deoxyhexoses used for the biosynthesis of aromatic amino acids in methanogens. This chain is 5'-deoxyadenosine deaminase, found in Methanococcus maripaludis (strain C6 / ATCC BAA-1332).